The primary structure comprises 201 residues: Heat shock protein beta-1 (201 aa).

Omega-N-methylarginine is present on arginine 12. At serine 15 the chain carries Phosphoserine; by MAPKAPK2 and MAPKAPK3. Serine 27 is modified (phosphoserine). The segment at alanine 68–lysine 201 is interaction with TGFB1I1. Residues alanine 72 to threonine 180 form the sHSP domain. A phosphoserine; by MAPKAPK2, MAPKAPK3 and MAPKAPK5 mark is found at serine 74 and serine 78. Phosphoserine occurs at positions 79, 82, and 94. Position 119 is an N6-acetyllysine (lysine 119). Phosphothreonine is present on threonine 170. Serine 172 and serine 195 each carry phosphoserine.

It belongs to the small heat shock protein (HSP20) family. As to quaternary structure, homooligomer. Homodimer; becomes monomeric upon activation. Heterooligomer; with HSPB6. Associates with alpha- and beta-tubulin. Interacts with TGFB1I1. Interacts with CRYAB. Interacts with HSPB8. Interacts with HSPBAP1. In terms of processing, phosphorylated upon exposure to protein kinase C activators and heat shock. Phosphorylation by MAPKAPK2 and MAPKAPK3 in response to stress dissociates HSPB1 from large small heat-shock protein (sHsps) oligomers and impairs its chaperone activity and ability to protect against oxidative stress effectively. Phosphorylation by MAPKAPK5 in response to PKA stimulation induces F-actin rearrangement.

It is found in the cytoplasm. The protein resides in the nucleus. It localises to the cytoskeleton. The protein localises to the spindle. In terms of biological role, small heat shock protein which functions as a molecular chaperone probably maintaining denatured proteins in a folding-competent state. Plays a role in stress resistance and actin organization. Through its molecular chaperone activity may regulate numerous biological processes including the phosphorylation and the axonal transport of neurofilament proteins. The chain is Heat shock protein beta-1 (HSPB1) from Bos taurus (Bovine).